The primary structure comprises 172 residues: Large ribosomal subunit protein eL20 (172 aa).

Belongs to the eukaryotic ribosomal protein eL20 family. In terms of assembly, component of the large ribosomal subunit. Mature ribosomes consist of a small (40S) and a large (60S) subunit. The 40S subunit contains about 32 different proteins and 1 molecule of RNA (18S). The 60S subunit contains 45 different proteins and 3 molecules of RNA (25S, 5.8S and 5S).

Its subcellular location is the cytoplasm. Its function is as follows. Component of the ribosome, a large ribonucleoprotein complex responsible for the synthesis of proteins in the cell. The small ribosomal subunit (SSU) binds messenger RNAs (mRNAs) and translates the encoded message by selecting cognate aminoacyl-transfer RNA (tRNA) molecules. The large subunit (LSU) contains the ribosomal catalytic site termed the peptidyl transferase center (PTC), which catalyzes the formation of peptide bonds, thereby polymerizing the amino acids delivered by tRNAs into a polypeptide chain. The nascent polypeptides leave the ribosome through a tunnel in the LSU and interact with protein factors that function in enzymatic processing, targeting, and the membrane insertion of nascent chains at the exit of the ribosomal tunnel. The sequence is that of Large ribosomal subunit protein eL20 from Candida albicans (strain SC5314 / ATCC MYA-2876) (Yeast).